Here is a 72-residue protein sequence, read N- to C-terminus: Protein kish-A (72 aa).

The N-terminal stretch at 1–26 (MSAIFNFQSLLTVILLLICTCAYIRS) is a signal peptide. The Extracellular portion of the chain corresponds to 27-53 (LTPSLLDKNKTGFLGIFWKCARIGERK). The N-linked (GlcNAc...) asparagine glycan is linked to Asn35. Residues 54–71 (SPYVAFCCIVMALTILFS) traverse the membrane as a helical segment. Position 72 (Glu72) is a topological domain, cytoplasmic.

It belongs to the KISH family.

The protein localises to the golgi apparatus membrane. Its function is as follows. Involved in the early part of the secretory pathway. The chain is Protein kish-A (tmem167a) from Danio rerio (Zebrafish).